The primary structure comprises 547 residues: Cytochrome P450 monooxygenase 81 (547 aa).

2 helical membrane passes run 6-23 and 106-124; these read IPTQ…LFLL and AFFA…ATAG. Cys-483 serves as a coordination point for heme. Asn-503 and Asn-516 each carry an N-linked (GlcNAc...) asparagine glycan.

This sequence belongs to the cytochrome P450 family. The cofactor is heme.

The protein localises to the membrane. It participates in secondary metabolite biosynthesis. In terms of biological role, cytochrome P450 monooxygenase that is able to use dehydroabietic acid as a substrate for oxidation. The protein is Cytochrome P450 monooxygenase 81 of Postia placenta (strain ATCC 44394 / Madison 698-R) (Brown rot fungus).